We begin with the raw amino-acid sequence, 24 residues long: Lectin (24 aa).

Residues 1 to 18 (AEEQSFSSTKFSTDQPNL) show a composition bias toward polar residues. The interval 1 to 24 (AEEQSFSSTKFSTDQPNLILQGDA) is disordered.

This sequence belongs to the leguminous lectin family. As to quaternary structure, homotetramer.

This Crotalaria juncea (Sunn hemp) protein is Lectin.